We begin with the raw amino-acid sequence, 359 residues long: Putative plant UBX domain-containing protein 15 (359 aa).

The region spanning 277 to 357 is the UBX domain; sequence DRSVVCSISV…GIANSIISVT (81 aa).

This chain is Putative plant UBX domain-containing protein 15, found in Arabidopsis thaliana (Mouse-ear cress).